The chain runs to 149 residues: Large ribosomal subunit protein bL9 (149 aa).

It belongs to the bacterial ribosomal protein bL9 family.

Functionally, binds to the 23S rRNA. The sequence is that of Large ribosomal subunit protein bL9 from Xylella fastidiosa (strain M23).